The primary structure comprises 387 residues: Alpha-sarcoglycan (387 aa).

Positions 1–23 are cleaved as a signal peptide; that stretch reads MAETLFWTPLLVVLLAGLGDTEA. Topologically, residues 24–290 are extracellular; it reads QQTTLHPLVG…APDRDFLVDA (267 aa). Residues Asn174 and Asn246 are each glycosylated (N-linked (GlcNAc...) asparagine). A helical transmembrane segment spans residues 291 to 311; it reads LVTLLVPLLVALLLTLLLAYV. The Cytoplasmic portion of the chain corresponds to 312 to 387; sequence MCCRREGRLK…AQVPLILDQH (76 aa). At Ser377 the chain carries Phosphoserine.

Belongs to the sarcoglycan alpha/epsilon family. In terms of assembly, interacts with the syntrophin SNTA1. Cross-link to form 2 major subcomplexes: one consisting of SGCB, SGCD and SGCG and the other consisting of SGCB and SGCD. The association between SGCB and SGCG is particularly strong while SGCA is loosely associated with the other sarcoglycans. As to expression, most strongly expressed in skeletal muscle. Also expressed in cardiac muscle and, at much lower levels, in lung. In the fetus, most abundant in cardiac muscle and, at lower levels, in lung. Also detected in liver and kidney. Not expressed in brain.

The protein localises to the cell membrane. It localises to the sarcolemma. It is found in the cytoplasm. The protein resides in the cytoskeleton. In terms of biological role, component of the sarcoglycan complex, a subcomplex of the dystrophin-glycoprotein complex which forms a link between the F-actin cytoskeleton and the extracellular matrix. The polypeptide is Alpha-sarcoglycan (SGCA) (Homo sapiens (Human)).